Here is a 114-residue protein sequence, read N- to C-terminus: uncharacterized protein (114 aa).

The N-myristoyl glycine; by host moiety is linked to residue Gly2. The next 2 membrane-spanning stretches (helical) occupy residues 11-31 and 44-64; these read FGLI…KDLL and GLMW…LVAI. Residues 73–114 are disordered; it reads VNKDSKDPKDKSIEFDDSPIRDGSSGTPDNSNEPTDLSVETS. The segment covering 75 to 92 has biased composition (basic and acidic residues); it reads KDSKDPKDKSIEFDDSPI. Residues 96 to 114 are compositionally biased toward polar residues; that stretch reads SSGTPDNSNEPTDLSVETS.

The protein resides in the membrane. This is an uncharacterized protein from Acanthamoeba polyphaga (Amoeba).